The following is a 483-amino-acid chain: NADH-quinone oxidoreductase subunit N (483 aa).

The next 14 membrane-spanning stretches (helical) occupy residues 8 to 28 (INLALMLPEIVISVVAMGLLL), 45 to 65 (IAAGALMVAMVITLLGVGATQ), 78 to 98 (FAAFMKVMLYLSTLLPMVVSW), 106 to 126 (LGNGEYFVLTLFAMLGGMFMI), 131 to 151 (FLVLYLGIELLSLAIYVLAAY), 166 to 186 (FVLGSMASGILLYGISLIYGV), 206 to 226 (MLGITMGLILVVSGLSFKIAA), 241 to 261 (PTSVTAFMAAMPKIAAFAALF), 275 to 295 (WGPIMALLAVVSMGVGALAGL), 303 to 323 (LLAYSSIGHVGYALIGLAVGN), 330 to 350 (VLVYLTIYIFMNVGAFGLILV), 373 to 393 (LALLMAIFMFSMAGIPPLAGF), 399 to 419 (IFMAAIDAHMYTVAILGVLFS), and 452 to 472 (AIVGVSGILVVLWGILPGSLM).

It belongs to the complex I subunit 2 family. As to quaternary structure, NDH-1 is composed of 14 different subunits. Subunits NuoA, H, J, K, L, M, N constitute the membrane sector of the complex.

Its subcellular location is the cell inner membrane. The enzyme catalyses a quinone + NADH + 5 H(+)(in) = a quinol + NAD(+) + 4 H(+)(out). In terms of biological role, NDH-1 shuttles electrons from NADH, via FMN and iron-sulfur (Fe-S) centers, to quinones in the respiratory chain. The immediate electron acceptor for the enzyme in this species is believed to be ubiquinone. Couples the redox reaction to proton translocation (for every two electrons transferred, four hydrogen ions are translocated across the cytoplasmic membrane), and thus conserves the redox energy in a proton gradient. The protein is NADH-quinone oxidoreductase subunit N of Magnetococcus marinus (strain ATCC BAA-1437 / JCM 17883 / MC-1).